The sequence spans 163 residues: SsrA-binding protein (163 aa).

The protein belongs to the SmpB family.

It is found in the cytoplasm. In terms of biological role, required for rescue of stalled ribosomes mediated by trans-translation. Binds to transfer-messenger RNA (tmRNA), required for stable association of tmRNA with ribosomes. tmRNA and SmpB together mimic tRNA shape, replacing the anticodon stem-loop with SmpB. tmRNA is encoded by the ssrA gene; the 2 termini fold to resemble tRNA(Ala) and it encodes a 'tag peptide', a short internal open reading frame. During trans-translation Ala-aminoacylated tmRNA acts like a tRNA, entering the A-site of stalled ribosomes, displacing the stalled mRNA. The ribosome then switches to translate the ORF on the tmRNA; the nascent peptide is terminated with the 'tag peptide' encoded by the tmRNA and targeted for degradation. The ribosome is freed to recommence translation, which seems to be the essential function of trans-translation. This Buchnera aphidicola subsp. Schizaphis graminum (strain Sg) protein is SsrA-binding protein.